Here is a 156-residue protein sequence, read N- to C-terminus: Cyanate hydratase (156 aa).

Catalysis depends on residues Arg-96, Glu-99, and Ser-122.

This sequence belongs to the cyanase family.

It carries out the reaction cyanate + hydrogencarbonate + 3 H(+) = NH4(+) + 2 CO2. Catalyzes the reaction of cyanate with bicarbonate to produce ammonia and carbon dioxide. This is Cyanate hydratase from Burkholderia vietnamiensis (strain G4 / LMG 22486) (Burkholderia cepacia (strain R1808)).